The chain runs to 226 residues: Peroxynitrite isomerase 2 (226 aa).

Residues 73 to 79 (GVWRGEG) carry the GXWXGXG motif. Residues lysine 189 and histidine 216 each coordinate heme b.

It belongs to the nitrobindin family. Homodimer. Requires heme b as cofactor.

It catalyses the reaction peroxynitrite = nitrate. It participates in nitrogen metabolism. Heme-binding protein able to scavenge peroxynitrite and to protect free L-tyrosine against peroxynitrite-mediated nitration, by acting as a peroxynitrite isomerase that converts peroxynitrite to nitrate. Therefore, this protein likely plays a role in peroxynitrite sensing and in the detoxification of reactive nitrogen and oxygen species (RNS and ROS, respectively). Is able to bind nitric oxide (NO) in vitro, but may act as a sensor of peroxynitrite levels in vivo. The sequence is that of Peroxynitrite isomerase 2 from Mycobacterium bovis (strain ATCC BAA-935 / AF2122/97).